The following is a 200-amino-acid chain: Dephospho-CoA kinase (200 aa).

Positions 4–200 (TIGLTGSVAT…TFIERFVKNK (197 aa)) constitute a DPCK domain. 12 to 17 (ATGKST) is an ATP binding site.

The protein belongs to the CoaE family.

It localises to the cytoplasm. The catalysed reaction is 3'-dephospho-CoA + ATP = ADP + CoA + H(+). The protein operates within cofactor biosynthesis; coenzyme A biosynthesis; CoA from (R)-pantothenate: step 5/5. In terms of biological role, catalyzes the phosphorylation of the 3'-hydroxyl group of dephosphocoenzyme A to form coenzyme A. This Listeria monocytogenes serovar 1/2a (strain ATCC BAA-679 / EGD-e) protein is Dephospho-CoA kinase.